Consider the following 178-residue polypeptide: Interleukin-10 (178 aa).

The first 18 residues, 1–18, serve as a signal peptide directing secretion; the sequence is MPGSALLCCLLLLAGVKT. N-linked (GlcNAc...) asparagine glycosylation is present at asparagine 29. 2 disulfide bridges follow: cysteine 30–cysteine 126 and cysteine 80–cysteine 132. Asparagine 134 carries N-linked (GlcNAc...) asparagine glycosylation.

Belongs to the IL-10 family. As to quaternary structure, homodimer. Interacts with IL10RA and IL10RB.

It localises to the secreted. Functionally, major immune regulatory cytokine that acts on many cells of the immune system where it has profound anti-inflammatory functions, limiting excessive tissue disruption caused by inflammation. Mechanistically, IL10 binds to its heterotetrameric receptor comprising IL10RA and IL10RB leading to JAK1 and STAT2-mediated phosphorylation of STAT3. In turn, STAT3 translocates to the nucleus where it drives expression of anti-inflammatory mediators. Targets antigen-presenting cells (APCs) such as macrophages and monocytes and inhibits their release of pro-inflammatory cytokines including granulocyte-macrophage colony-stimulating factor /GM-CSF, granulocyte colony-stimulating factor/G-CSF, IL-1 alpha, IL-1 beta, IL-6, IL-8 and TNF-alpha. Also interferes with antigen presentation by reducing the expression of MHC-class II and co-stimulatory molecules, thereby inhibiting their ability to induce T cell activation. In addition, controls the inflammatory response of macrophages by reprogramming essential metabolic pathways including mTOR signaling. This chain is Interleukin-10 (Il10), found in Rattus norvegicus (Rat).